The sequence spans 122 residues: Flowering-promoting factor 1-like protein 3 (122 aa).

The tract at residues 16–36 is disordered; that stretch reads ENPGSEESSSAGDGGGGGRRK.

This sequence belongs to the FPF1 family.

The protein is Flowering-promoting factor 1-like protein 3 of Oryza sativa subsp. japonica (Rice).